Reading from the N-terminus, the 273-residue chain is Shikimate dehydrogenase (NADP(+)) (273 aa).

Shikimate is bound by residues 18-20 and T65; that span reads SKS. The Proton acceptor role is filled by K69. Residue E81 participates in NADP(+) binding. Shikimate contacts are provided by N90 and D105. NADP(+) is bound by residues 130–134, 154–159, and M217; these read GAGGA and NRTHSK. A shikimate-binding site is contributed by Y219. An NADP(+)-binding site is contributed by G240.

It belongs to the shikimate dehydrogenase family. As to quaternary structure, homodimer.

The catalysed reaction is shikimate + NADP(+) = 3-dehydroshikimate + NADPH + H(+). The protein operates within metabolic intermediate biosynthesis; chorismate biosynthesis; chorismate from D-erythrose 4-phosphate and phosphoenolpyruvate: step 4/7. Involved in the biosynthesis of the chorismate, which leads to the biosynthesis of aromatic amino acids. Catalyzes the reversible NADPH linked reduction of 3-dehydroshikimate (DHSA) to yield shikimate (SA). The protein is Shikimate dehydrogenase (NADP(+)) of Herminiimonas arsenicoxydans.